A 181-amino-acid chain; its full sequence is Probable GTP-binding protein EngB (181 aa).

In terms of domain architecture, EngB-type G spans 18 to 181; sequence PKNEICFVGR…LQDLVNNLFN (164 aa). Residues 26–33, 52–56, 70–73, 137–140, and 164–166 each bind GTP; these read GRSNVGKS, GKTKL, DLPG, TKRD, and VSI. Positions 33 and 54 each coordinate Mg(2+).

This sequence belongs to the TRAFAC class TrmE-Era-EngA-EngB-Septin-like GTPase superfamily. EngB GTPase family. Mg(2+) serves as cofactor.

In terms of biological role, necessary for normal cell division and for the maintenance of normal septation. The chain is Probable GTP-binding protein EngB from Mycoplasma mobile (strain ATCC 43663 / 163K / NCTC 11711) (Mesomycoplasma mobile).